A 117-amino-acid chain; its full sequence is Venom nerve growth factor (117 aa).

3 disulfide bridges follow: Cys12–Cys77, Cys55–Cys105, and Cys65–Cys107. Asn21 is a glycosylation site (N-linked (GlcNAc...) asparagine).

This sequence belongs to the NGF-beta family. In terms of assembly, homodimer; non-covalently linked. In terms of tissue distribution, expressed by the venom gland.

It is found in the secreted. Its function is as follows. Nerve growth factor is important for the development and maintenance of the sympathetic and sensory nervous systems. It stimulates division and differentiation of sympathetic and embryonic sensory neurons as well as basal forebrain cholinergic neurons in the brain. Its relevance in the snake venom is not clear. However, it has been shown to inhibit metalloproteinase-dependent proteolysis of platelet glycoprotein Ib alpha, suggesting a metalloproteinase inhibition to prevent metalloprotease autodigestion and/or protection against prey proteases. Binds a lipid between the two protein chains in the homodimer. The lipid-bound form promotes histamine relase from mouse mast cells, contrary to the lipid-free form. In Daboia russelii (Russel's viper), this protein is Venom nerve growth factor.